Reading from the N-terminus, the 572-residue chain is Glypican-5 (572 aa).

A signal peptide spans 1 to 24 (MDAQTWPVGFRCLLLLALVGSARS). N120 and N237 each carry an N-linked (GlcNAc...) asparagine glycan. Positions 355 to 375 (SPRCSFDQSKEKHGMKTTTRN) are disordered. S441, S486, S495, S507, and S509 each carry an O-linked (Xyl...) (glycosaminoglycan) serine glycan. N527 carries an N-linked (GlcNAc...) asparagine glycan.

The protein belongs to the glypican family. As to expression, in adult, primarily expressed in the brain. Also detected in fetal brain, lung and liver.

Its subcellular location is the cell membrane. It localises to the secreted. It is found in the extracellular space. In terms of biological role, cell surface proteoglycan that bears heparan sulfate. This is Glypican-5 (GPC5) from Homo sapiens (Human).